The chain runs to 256 residues: 5-keto-4-deoxy-D-glucarate aldolase (256 aa).

The active-site Proton acceptor is the His-50. Residue Gln-151 coordinates substrate. Residue Glu-153 coordinates Mg(2+). The substrate site is built by Ser-178 and Asp-179. Residue Asp-179 participates in Mg(2+) binding.

The protein belongs to the HpcH/HpaI aldolase family. KDGluc aldolase subfamily. Homohexamer; trimer of dimers. Requires Mg(2+) as cofactor.

It catalyses the reaction 5-dehydro-4-deoxy-D-glucarate = 2-hydroxy-3-oxopropanoate + pyruvate. It carries out the reaction 2-dehydro-3-deoxy-D-glucarate = 2-hydroxy-3-oxopropanoate + pyruvate. It participates in carbohydrate acid metabolism; galactarate degradation; D-glycerate from galactarate: step 2/3. Its function is as follows. Catalyzes the reversible retro-aldol cleavage of both 5-keto-4-deoxy-D-glucarate and 2-keto-3-deoxy-D-glucarate to pyruvate and tartronic semialdehyde. This is 5-keto-4-deoxy-D-glucarate aldolase from Shigella boydii serotype 4 (strain Sb227).